The chain runs to 449 residues: Exodeoxyribonuclease 7 large subunit (449 aa).

This sequence belongs to the XseA family. As to quaternary structure, heterooligomer composed of large and small subunits.

The protein localises to the cytoplasm. The catalysed reaction is Exonucleolytic cleavage in either 5'- to 3'- or 3'- to 5'-direction to yield nucleoside 5'-phosphates.. Functionally, bidirectionally degrades single-stranded DNA into large acid-insoluble oligonucleotides, which are then degraded further into small acid-soluble oligonucleotides. This is Exodeoxyribonuclease 7 large subunit from Salmonella paratyphi B (strain ATCC BAA-1250 / SPB7).